The chain runs to 148 residues: Deoxyuridine 5'-triphosphate nucleotidohydrolase (148 aa).

It belongs to the dUTPase family. It depends on Mg(2+) as a cofactor.

The catalysed reaction is dUTP + H2O = dUMP + diphosphate + H(+). It participates in pyrimidine metabolism; dUMP biosynthesis; dUMP from dCTP (dUTP route): step 2/2. In terms of biological role, this enzyme decreases the intracellular concentration of dUTP so that uracil cannot be incorporated into viral progeny DNA. This activity is sufficient to exclude uracil from the DNA during phage replication. In the case of dUTPase mutant phages, the host dUTPase activity is not sufficient to exclude uracil from T5 DNA and uracil are incorporated, leading to decreased phage viability. The polypeptide is Deoxyuridine 5'-triphosphate nucleotidohydrolase (DUT) (Escherichia coli (Enterobacteria phage T5)).